Consider the following 273-residue polypeptide: Phosphatidylglycerol--prolipoprotein diacylglyceryl transferase (273 aa).

7 helical membrane passes run 21–41 (VSVR…LWLA), 60–80 (LLFA…VIFY), 95–115 (VWTG…AMFW), 124–144 (FFGV…MGRM), 176–196 (SQLY…NWFI), 203–223 (GAVS…VEFV), and 237–257 (ISMG…MMVW). An a 1,2-diacyl-sn-glycero-3-phospho-(1'-sn-glycerol)-binding site is contributed by R143.

Belongs to the Lgt family.

It localises to the cell inner membrane. The enzyme catalyses L-cysteinyl-[prolipoprotein] + a 1,2-diacyl-sn-glycero-3-phospho-(1'-sn-glycerol) = an S-1,2-diacyl-sn-glyceryl-L-cysteinyl-[prolipoprotein] + sn-glycerol 1-phosphate + H(+). It participates in protein modification; lipoprotein biosynthesis (diacylglyceryl transfer). Catalyzes the transfer of the diacylglyceryl group from phosphatidylglycerol to the sulfhydryl group of the N-terminal cysteine of a prolipoprotein, the first step in the formation of mature lipoproteins. This is Phosphatidylglycerol--prolipoprotein diacylglyceryl transferase from Vibrio campbellii (strain ATCC BAA-1116).